An 801-amino-acid chain; its full sequence is Protein ACCUMULATION AND REPLICATION OF CHLOROPLASTS 6, chloroplastic (801 aa).

The N-terminal 67 residues, 1 to 67, are a transit peptide targeting the chloroplast; sequence MEALSHVGIG…SSSFATATTT (67 aa). The Stromal portion of the chain corresponds to 68-618; the sequence is ATLVSPPPSI…ADMLKEASVK (551 aa). Positions 89-153 constitute a J domain; sequence DFYQVLGAQT…RSRREYNEGL (65 aa). Residues 619-638 form a helical membrane-spanning segment; it reads ILAAGVAIGLISLFSQKYFL. The Chloroplast intermembrane segment spans residues 639 to 801; it reads KSSSSFQRKD…KITEGSVLAS (163 aa). Residues 639–801 are interaction with PDV2; it reads KSSSSFQRKD…KITEGSVLAS (163 aa).

As to quaternary structure, self-interacts. Part of a complex made of ARC3, ARC6, FTSZ1 and FTSZ2. Interacts with FTSZ2-1 and FTSZ2-2 (via C-terminus), but not with FTSZ1; this interaction enables ARC3 binding to FTSZ2. Binds to CDT1A. Interacts (via C-terminus) with PDV2 (via C-terminus) in the chloroplast intermembrane space; this interaction induces homodimerization and leads to the formation of a heterotetramer containing two ARC6 and two PDV2 subunits. Interacts with MCD1 in the chloroplast stroma and facilitates its subsequent binding to FtsZ2-1. Interacts (via J domain) with CJD1 (via J-like domain). Mostly expressed in young leaves.

It localises to the plastid. It is found in the chloroplast inner membrane. In terms of biological role, component of the plastid division machinery consisting in a binary fission accomplished by the simultaneous constriction of the FtsZ ring on the stromal side of the inner envelope membrane, and the ARC5 ring on the cytosolic side of the outer envelope membrane. Involved in the initiation of proplastid and plastid division (including chloroplasts, statoliths and leukoplasts). Promotes the assembly and/or stabilization of the plastid-dividing FtsZ ring, functioning as an antagonistic regulator of FtsZ dynamics against CDP1 and facilitating MCD1 positioning to membrane tethered FtsZ filaments to form the chloroplast Z-Ring; inhibits GDP-induced disassembly of FTSZ2 but enables ARC3 binding to FTSZ2-1. Relays plastid division site position between stroma and outer surface via interactions with the stromal FtsZ ring and the outer membrane PDV2 that recruits cytoplasmic ARC5 ring. Required for plastid equatorial positioning of PDV2 and ARC5. May contribute to gravitropism in stems and hypocotyls. Seems to influence stromule (stroma-filled tubular extensions of the plastid envelope membrane) length and frequency. The protein is Protein ACCUMULATION AND REPLICATION OF CHLOROPLASTS 6, chloroplastic of Arabidopsis thaliana (Mouse-ear cress).